Consider the following 369-residue polypeptide: FAD-dependent monooxygenase FPY4 (369 aa).

This sequence belongs to the aromatic-ring hydroxylase family. FAD is required as a cofactor.

It participates in secondary metabolite biosynthesis. In terms of biological role, FAD-dependent monooxygenase; part of the gene cluster that mediates the biosynthesis of the gamma-pyrones fusapyrone (FPY) and deoxyfusapyrone (dFPY). FPY is an undecaketide and thus likely synthesized by the polyketide synthase FPY1 from acetyl-CoA functioning as starter unit and the addition of 10 malonyl-CoA extender units by successive Claisen-condensations. Next to this, FPY shares some rare features: C-glycosylated 4-deoxyglucose at C-3, a gem-dimethyl group at C-13, and an alpha-beta to beta-gamma double bond shift at C-20. During FPY biosynthesis mono-C-methyl groups are transferred to the tetra-, penta-, hexa- and heptaketide, while two C-methyl groups are transferred to the nonaketide, suggesting that the CMet domain is programmed to selectively catalyze two successive C-alpha-methylation reactions of the nonaketide, while other alpha-carbons are non- or mono-methylated only. While the origin of the 4'-deoxyglucose moiety remains opaque, its transfer to C-3 is most likely mediated by the C-glycosyltransferase FPY2. Next to this, the hydroxyl group present at C-33 and discriminating between FPY and dFPY, is likely to be installed by the cytochrome P450 monooxygenase FPY7. No putative function can be predicted for the remaining genes FPY3-FPY6. In Fusarium mangiferae (Mango malformation disease fungus), this protein is FAD-dependent monooxygenase FPY4.